Reading from the N-terminus, the 157-residue chain is MQLTVKALQGRECSLQVAEDELVSTLKHLVSDKLNVPVRQQRLLFKGKALADEKRLSDYNIGPNSKLNLVVKPLEKVLLEEGSAHRLVDSSATPIWQLISKVLARHFSIGDASRVLEQLQRDYDRSLSRLTLDDIERLASRFLHPEVTEAMEKGFCK.

The Ubiquitin-like domain occupies 1–76 (MQLTVKALQG…LNLVVKPLEK (76 aa)). A Glycyl lysine isopeptide (Lys-Gly) (interchain with G-Cter in ubiquitin) cross-link involves residue Lys48. A Phosphoserine modification is found at Ser90. Residues 96-138 (WQLISKVLARHFSIGDASRVLEQLQRDYDRSLSRLTLDDIERL) form a required and sufficient for interaction with BAG6 region.

In terms of assembly, component of the BAG6/BAT3 complex, at least composed of BAG6, UBL4A and GET4/TRC35. Interacts with BAG6; the interaction is direct and required for UBL4A protein stability. Interacts with USP13; may be indirect via BAG6. In terms of processing, polyubiquitinated. Ubiquitination by AMFR and deubiquitination by USP13 may regulate the interaction between the BAG6/BAT complex and SGTA and therefore may regulate client proteins fate.

It is found in the cytoplasm. It localises to the cytosol. Its subcellular location is the nucleus. In terms of biological role, as part of a cytosolic protein quality control complex, the BAG6/BAT3 complex, maintains misfolded and hydrophobic patches-containing proteins in a soluble state and participates in their proper delivery to the endoplasmic reticulum or alternatively can promote their sorting to the proteasome where they undergo degradation. The BAG6/BAT3 complex is involved in the post-translational delivery of tail-anchored/type II transmembrane proteins to the endoplasmic reticulum membrane. Recruited to ribosomes, it interacts with the transmembrane region of newly synthesized tail-anchored proteins and together with SGTA and ASNA1 mediates their delivery to the endoplasmic reticulum. Client proteins that cannot be properly delivered to the endoplasmic reticulum are ubiquitinated and sorted to the proteasome. Similarly, the BAG6/BAT3 complex also functions as a sorting platform for proteins of the secretory pathway that are mislocalized to the cytosol either delivering them to the proteasome for degradation or to the endoplasmic reticulum. The BAG6/BAT3 complex also plays a role in the endoplasmic reticulum-associated degradation (ERAD), a quality control mechanism that eliminates unwanted proteins of the endoplasmic reticulum through their retrotranslocation to the cytosol and their targeting to the proteasome. It maintains these retrotranslocated proteins in an unfolded yet soluble state condition in the cytosol to ensure their proper delivery to the proteasome. The protein is Ubiquitin-like protein 4A (Ubl4a) of Rattus norvegicus (Rat).